The following is a 297-amino-acid chain: Homoserine kinase (297 aa).

ATP is bound at residue 79–89 (PIARGLGSSGA).

Belongs to the GHMP kinase family. Homoserine kinase subfamily.

The protein localises to the cytoplasm. The enzyme catalyses L-homoserine + ATP = O-phospho-L-homoserine + ADP + H(+). It functions in the pathway amino-acid biosynthesis; L-threonine biosynthesis; L-threonine from L-aspartate: step 4/5. Catalyzes the ATP-dependent phosphorylation of L-homoserine to L-homoserine phosphate. The sequence is that of Homoserine kinase from Pyrobaculum aerophilum (strain ATCC 51768 / DSM 7523 / JCM 9630 / CIP 104966 / NBRC 100827 / IM2).